Reading from the N-terminus, the 453-residue chain is Calcium-binding tyrosine phosphorylation-regulated protein (453 aa).

The RIIa domain maps to 12-49; that stretch reads YGLKTLLEGVSRAILKTNPTNITQFAAVYFKELIVFRE. Disordered regions lie at residues 86-165, 246-278, and 406-453; these read PIKP…PVSA, PVSE…QVTS, and IINP…PEQV. Positions 143-154 are enriched in low complexity; it reads DKPTTPKTDYTP.

As to quaternary structure, interacts with FSCB. Phosphorylated on tyrosine residues during in vitro capacitation. Dephosphorylation affects its ability to bind calcium. Expressed in spermatozoa.

It is found in the cytoplasm. It localises to the cytoskeleton. Its subcellular location is the cell projection. The protein localises to the cilium. The protein resides in the flagellum. In terms of biological role, may function as a regulator of both motility- and head-associated functions such as capacitation and the acrosome reaction. May bind calcium in vitro. This Mus musculus (Mouse) protein is Calcium-binding tyrosine phosphorylation-regulated protein (Cabyr).